The following is a 193-amino-acid chain: Flagellin B1 (193 aa).

The propeptide occupies 1–12 (MFEFITDEDERG).

This sequence belongs to the archaeal flagellin family. Glycosylated.

The protein resides in the archaeal flagellum. Its function is as follows. Flagellin is the subunit protein which polymerizes to form the filaments of archaeal flagella. The polypeptide is Flagellin B1 (flaB1) (Halobacterium salinarum (strain ATCC 700922 / JCM 11081 / NRC-1) (Halobacterium halobium)).